Reading from the N-terminus, the 507-residue chain is ATP synthase subunit alpha, chloroplastic (507 aa).

170-177 (GDRQTGKT) is a binding site for ATP.

The protein belongs to the ATPase alpha/beta chains family. As to quaternary structure, F-type ATPases have 2 components, CF(1) - the catalytic core - and CF(0) - the membrane proton channel. CF(1) has five subunits: alpha(3), beta(3), gamma(1), delta(1), epsilon(1). CF(0) has four main subunits: a, b, b' and c.

It localises to the plastid. Its subcellular location is the chloroplast thylakoid membrane. It catalyses the reaction ATP + H2O + 4 H(+)(in) = ADP + phosphate + 5 H(+)(out). Its function is as follows. Produces ATP from ADP in the presence of a proton gradient across the membrane. The alpha chain is a regulatory subunit. The chain is ATP synthase subunit alpha, chloroplastic from Nicotiana tomentosiformis (Tobacco).